We begin with the raw amino-acid sequence, 277 residues long: NADPH-dependent 7-cyano-7-deazaguanine reductase (277 aa).

Valine 83–serine 85 contributes to the substrate binding site. Serine 85–lysine 86 is a binding site for NADPH. Cysteine 184 acts as the Thioimide intermediate in catalysis. Aspartate 191 serves as the catalytic Proton donor. Histidine 223 to glutamate 224 is a binding site for substrate. NADPH is bound at residue arginine 252–glycine 253.

It belongs to the GTP cyclohydrolase I family. QueF type 2 subfamily. As to quaternary structure, homodimer.

The protein resides in the cytoplasm. It carries out the reaction 7-aminomethyl-7-carbaguanine + 2 NADP(+) = 7-cyano-7-deazaguanine + 2 NADPH + 3 H(+). It functions in the pathway tRNA modification; tRNA-queuosine biosynthesis. Its function is as follows. Catalyzes the NADPH-dependent reduction of 7-cyano-7-deazaguanine (preQ0) to 7-aminomethyl-7-deazaguanine (preQ1). The polypeptide is NADPH-dependent 7-cyano-7-deazaguanine reductase (Ralstonia nicotianae (strain ATCC BAA-1114 / GMI1000) (Ralstonia solanacearum)).